We begin with the raw amino-acid sequence, 156 residues long: Small ribosomal subunit protein uS7 (156 aa).

The protein belongs to the universal ribosomal protein uS7 family. Part of the 30S ribosomal subunit. Contacts proteins S9 and S11.

Functionally, one of the primary rRNA binding proteins, it binds directly to 16S rRNA where it nucleates assembly of the head domain of the 30S subunit. Is located at the subunit interface close to the decoding center, probably blocks exit of the E-site tRNA. The protein is Small ribosomal subunit protein uS7 of Salmonella agona (strain SL483).